A 347-amino-acid polypeptide reads, in one-letter code: Tetracycline resistance determinant (347 aa).

Transmembrane regions (helical) follow at residues 3–20, 30–52, 73–95, 108–130, 137–156, 161–183, 204–226, and 294–316; these read VLGA…LIVA, SPAA…PVEL, CSAV…PLFL, LVVI…LIAS, LAIV…ATTG, MWGI…TVIT, CAGQ…AVAL, and GFHI…TWFL. The segment at 321–347 is disordered; it reads EETAPEEERPAESGAGAKNGPLPASDA.

The protein belongs to the major facilitator superfamily. TCR/Tet family.

It is found in the cell membrane. Its function is as follows. Resistance to tetracycline by an active tetracycline efflux. This is an energy-dependent process that decreases the accumulation of the antibiotic in whole cells. This protein functions as a metal-tetracycline/H(+) antiporter. In Streptomyces rimosus, this protein is Tetracycline resistance determinant (tetB).